A 2357-amino-acid polypeptide reads, in one-letter code: Myosin-I heavy chain (2357 aa).

Residues 13–688 (QPVEDMITLP…QYLKLEELRK (676 aa)) form the Myosin motor domain. Residue 106-113 (GESGAGKT) coordinates ATP. The interval 579-586 (YVRCIKPN) is actin-binding. Residues 691–720 (LLKKVTLIQSVWRMYRCKKRYQQIRASAKI) enclose the IQ domain. Residues 787-891 (KRDRNARMLE…QDKNINELDD (105 aa)) adopt a coiled-coil conformation. Positions 787–1076 (KRDRNARMLE…PILGAPPPPP (290 aa)) are binding to talin A. 2 disordered regions span residues 797–852 (IQRE…EEEL) and 974–1112 (ASSF…NPQP). Low complexity-rich tracts occupy residues 1003 to 1025 (NNNYINSNNGDLPLPTSQSSDFS) and 1078 to 1106 (TSDSTSPSATATGNNTPNSSSASASQSTN). A MyTH4 1 domain is found at 1155–1313 (YQKSHIKSSL…PSVTELESIK (159 aa)). The region spanning 1318 to 1620 (IFVRITATDG…EYSLYLRNNA (303 aa)) is the FERM 1 domain. The SH3 domain occupies 1618-1678 (NNAKYARALK…PVDHVEILLS (61 aa)). The segment at 1686-1849 (VHPVATLSPP…PSKRLTVSPA (164 aa)) is disordered. A compositionally biased stretch (pro residues) spans 1706-1733 (TPPPPPSISDSMSPPPQVGMLPPPPPPS). 2 stretches are compositionally biased toward low complexity: residues 1734 to 1746 (VMGSTKPIEIPSL) and 1755 to 1770 (SSNSSVPNSPIGSPMM). Residues 1817-1828 (FRSSLRVSMLNT) are compositionally biased toward polar residues. The MyTH4 2 domain occupies 1894-2051 (FNKDPIKESL…PSATEIQSFR (158 aa)). The region spanning 2060–2357 (STCKIRFIDQ…ASVYQFYSSQ (298 aa)) is the FERM 2 domain.

Belongs to the TRAFAC class myosin-kinesin ATPase superfamily. Myosin family. As to quaternary structure, monomer. Interacts with talA.

Its subcellular location is the cytoplasm. Functionally, myosins are actin-based motor molecules with ATPase activity. Involved in the early steps of phagocytosis and adhesion. This Dictyostelium discoideum (Social amoeba) protein is Myosin-I heavy chain (myoI).